The primary structure comprises 345 residues: Platelet-derived growth factor C (345 aa).

The first 22 residues, 1–22 (MLLLGLLLLTSALAGQRTGTRA), serve as a signal peptide directing secretion. The segment covering 24–33 (SNLSSKLQLS) has biased composition (polar residues). The disordered stretch occupies residues 24 to 45 (SNLSSKLQLSSDKEQNGVQDPR). The N-linked (GlcNAc...) asparagine glycan is linked to Asn25. Basic and acidic residues predominate over residues 34 to 45 (SDKEQNGVQDPR). The 118-residue stretch at 46-163 (HERVVTISGN…PGFCIHYSII (118 aa)) folds into the CUB domain. An N-linked (GlcNAc...) asparagine glycan is attached at Asn55. Disulfide bonds link Cys104–Cys124, Cys250–Cys294, Cys280–Cys335, and Cys287–Cys337.

It belongs to the PDGF/VEGF growth factor family. As to quaternary structure, homodimer; disulfide-linked. Interacts with PDGFRA homodimers, and with heterodimers formed by PDGFRA and PDGFRB. Interacts (via CUB domain) with PLAT (via kringle domain). Post-translationally, proteolytic removal of the N-terminal CUB domain releasing the core domain is necessary for unmasking the receptor-binding epitopes of the core domain. Cleavage after basic residues in the hinge region (region connecting the CUB and growth factor domains) gives rise to the receptor-binding form. Cleaved by PLAT and PLG. In terms of processing, sumoylated by SUMO1. N-glycosylated. In terms of tissue distribution, mainly expressed in kidney, testis, liver, heart and brain (at protein level). Highly expressed in airway epithelium, interstitial cells and alveolar macrophages in the lung of mice overexpressing IL13. Expressed in the ovaries.

Its subcellular location is the cytoplasm. It is found in the cytosol. The protein resides in the secreted. The protein localises to the nucleus. It localises to the cytoplasmic granule. Its subcellular location is the cell membrane. Growth factor that plays an essential role in the regulation of embryonic development, cell proliferation, cell migration, survival and chemotaxis. Potent mitogen and chemoattractant for cells of mesenchymal origin. Required for normal skeleton formation during embryonic development, especially for normal development of the craniofacial skeleton and for normal development of the palate. Required for normal skin morphogenesis during embryonic development. Plays an important role in wound healing, where it appears to be involved in three stages: inflammation, proliferation and remodeling. Plays an important role in angiogenesis and blood vessel development. Involved in fibrotic processes, in which transformation of interstitial fibroblasts into myofibroblasts plus collagen deposition occurs. The CUB domain has mitogenic activity in coronary artery smooth muscle cells, suggesting a role beyond the maintenance of the latency of the PDGF domain. In the nucleus, PDGFC seems to have additional function. In Mus musculus (Mouse), this protein is Platelet-derived growth factor C (Pdgfc).